We begin with the raw amino-acid sequence, 358 residues long: Probable D-xylulose reductase A (358 aa).

Zn(2+) contacts are provided by Cys47, His72, and Glu73. Position 182–187 (182–187 (GAGPVG)) interacts with NAD(+).

The protein belongs to the zinc-containing alcohol dehydrogenase family. Zn(2+) is required as a cofactor.

It catalyses the reaction xylitol + NAD(+) = D-xylulose + NADH + H(+). It functions in the pathway carbohydrate degradation; L-arabinose degradation via L-arabinitol; D-xylulose 5-phosphate from L-arabinose (fungal route): step 4/5. Functionally, xylitol dehydrogenase which catalyzes the conversion of xylitol to D-xylulose. Xylose is a major component of hemicelluloses such as xylan. Most fungi utilize D-xylose via three enzymatic reactions, xylose reductase (XR), xylitol dehydrogenase (XDH), and xylulokinase, to form xylulose 5-phosphate, which enters pentose phosphate pathway. The protein is Probable D-xylulose reductase A (xdhA) of Aspergillus niger (strain ATCC MYA-4892 / CBS 513.88 / FGSC A1513).